We begin with the raw amino-acid sequence, 574 residues long: Calcium-dependent protein kinase 9 (574 aa).

The tract at residues 1-64 (MGNTCCVAPA…RARAKPNPYD (64 aa)) is disordered. Gly-2 carries N-myristoyl glycine lipidation. A compositionally biased stretch (low complexity) spans 28 to 40 (KSPAPSATTTTAT). The Protein kinase domain maps to 101-359 (YQLGRELGRG…AQQVLDHPWL (259 aa)). Residues 107-115 (LGRGEFGVT) and Lys-130 contribute to the ATP site. Residue Asp-225 is the Proton acceptor of the active site. Positions 365-395 (APNVPLGDVVRARLKQFSLMNRLKKKAMRVI) are autoinhibitory domain. 4 EF-hand domains span residues 402–437 (EEVE…VGSK), 438–473 (LAEP…LQRL), 474–509 (SNDN…DSGH), and 510–545 (ADDA…GTDW). Ca(2+)-binding residues include Asp-415, Asp-417, Asn-419, Arg-421, Glu-426, Asp-451, Asp-453, Asn-455, Tyr-457, Glu-462, Asp-487, Asp-489, Ser-491, Tyr-493, Glu-498, Asp-523, Asp-525, Asp-527, Arg-529, and Glu-534.

The protein belongs to the protein kinase superfamily. Ser/Thr protein kinase family. CDPK subfamily. In terms of tissue distribution, expressed in leaf blades and stems. Expressed at low levels in anthers and spikelets.

It localises to the membrane. It carries out the reaction L-seryl-[protein] + ATP = O-phospho-L-seryl-[protein] + ADP + H(+). The enzyme catalyses L-threonyl-[protein] + ATP = O-phospho-L-threonyl-[protein] + ADP + H(+). With respect to regulation, activated by calcium. Autophosphorylation may play an important role in the regulation of the kinase activity. Its function is as follows. May play a role in signal transduction pathways that involve calcium as a second messenger. Functions in signal transduction pathways that positively regulate responses to drought, osmotic, and dehydration stress. Regulates expression of stress-associated genes in response to drought. Involved in tolerance to drought stress by increasing proline and soluble sugars, and improving stomatal closure. Required for pollen maturation and spikelet fertility. The polypeptide is Calcium-dependent protein kinase 9 (Oryza sativa subsp. japonica (Rice)).